We begin with the raw amino-acid sequence, 394 residues long: Acetate kinase 1 (394 aa).

Mg(2+) is bound at residue Asn8. ATP is bound at residue Lys15. Arg90 contacts substrate. The active-site Proton donor/acceptor is the Asp147. ATP is bound by residues 207–211 (HLGSG) and 282–284 (DMR). Position 382 (Glu382) interacts with Mg(2+).

This sequence belongs to the acetokinase family. In terms of assembly, homodimer. It depends on Mg(2+) as a cofactor. Mn(2+) is required as a cofactor.

The protein localises to the cytoplasm. It catalyses the reaction acetate + ATP = acetyl phosphate + ADP. Its pathway is metabolic intermediate biosynthesis; acetyl-CoA biosynthesis; acetyl-CoA from acetate: step 1/2. In terms of biological role, catalyzes the formation of acetyl phosphate from acetate and ATP. Can also catalyze the reverse reaction. The sequence is that of Acetate kinase 1 from Latilactobacillus sakei subsp. sakei (strain 23K) (Lactobacillus sakei subsp. sakei).